The sequence spans 302 residues: B3 domain-containing protein At3g17010 (302 aa).

A DNA-binding region (TF-B3 1) is located at residues 21-116 (FFKIFQRADL…VFHVNIYEQN (96 aa)). The segment at 123–192 (PRKFQTMGPS…KVKKKSKSKS (70 aa)) is disordered. Residues 135 to 174 (IKKEEGENSLIDVKKEEESDESPGRAEFLVRKKKTEDSKS) are compositionally biased toward basic and acidic residues. A compositionally biased stretch (basic residues) spans 175–192 (SKKKMTRNKVKKKSKSKS). The TF-B3 2 DNA-binding region spans 199–292 (VPEFKITIRK…EFVLLTSKKN (94 aa)).

It is found in the nucleus. The protein is B3 domain-containing protein At3g17010 of Arabidopsis thaliana (Mouse-ear cress).